The primary structure comprises 273 residues: Small ribosomal subunit protein uS3 (273 aa).

The KH type-2 domain maps to 43–111 (IRQLMSTGME…QVQLNILEVK (69 aa)). Residues 218 to 227 (QQAAAAPSRG) show a composition bias toward low complexity. The disordered stretch occupies residues 218-273 (QQAAAAPSRGRAGDRPGRPGGDRRRRNDRPAAEAAPAAVEAPAAEAAAPAAEGGQA). A compositionally biased stretch (basic and acidic residues) spans 228–239 (RAGDRPGRPGGD). A compositionally biased stretch (low complexity) spans 249–273 (AEAAPAAVEAPAAEAAAPAAEGGQA).

Belongs to the universal ribosomal protein uS3 family. In terms of assembly, part of the 30S ribosomal subunit. Forms a tight complex with proteins S10 and S14.

In terms of biological role, binds the lower part of the 30S subunit head. Binds mRNA in the 70S ribosome, positioning it for translation. This Paenarthrobacter aurescens (strain TC1) protein is Small ribosomal subunit protein uS3.